A 445-amino-acid polypeptide reads, in one-letter code: Phosphoglucosamine mutase (445 aa).

The active-site Phosphoserine intermediate is Ser-101. 4 residues coordinate Mg(2+): Ser-101, Asp-240, Asp-242, and Asp-244. Residue Ser-101 is modified to Phosphoserine.

This sequence belongs to the phosphohexose mutase family. Mg(2+) is required as a cofactor. In terms of processing, activated by phosphorylation.

It catalyses the reaction alpha-D-glucosamine 1-phosphate = D-glucosamine 6-phosphate. In terms of biological role, catalyzes the conversion of glucosamine-6-phosphate to glucosamine-1-phosphate. This Azotobacter vinelandii (strain DJ / ATCC BAA-1303) protein is Phosphoglucosamine mutase.